Here is a 181-residue protein sequence, read N- to C-terminus: ADP-ribosylation factor 1 (181 aa).

The N-myristoyl glycine moiety is linked to residue glycine 2. GTP contacts are provided by residues 24–31, 67–71, and 126–129; these read GLDAAGKT, DVGGQ, and NKQD.

It belongs to the small GTPase superfamily. Arf family. Seedling shoots.

The protein localises to the golgi apparatus. The catalysed reaction is GTP + H2O = GDP + phosphate + H(+). Its function is as follows. GTP-binding protein involved in protein trafficking; may modulate vesicle budding and uncoating within the Golgi apparatus. This is ADP-ribosylation factor 1 from Oryza sativa subsp. japonica (Rice).